The primary structure comprises 263 residues: Putative TATA-binding protein pB263R (263 aa).

Belongs to the asfivirus B263R family.

Its function is as follows. Putative TATA-binding protein. The sequence is that of Putative TATA-binding protein pB263R from African swine fever virus (isolate Warthog/Namibia/Wart80/1980) (ASFV).